The sequence spans 366 residues: Protein BIG GRAIN 1-like B (366 aa).

Disordered stretches follow at residues 42 to 73 (DSSTNSSSMRKTKHQNREDTRVSANRRDDFNR) and 129 to 148 (FERSPQNHRPNSSNKQEHGS). Basic and acidic residues predominate over residues 56-73 (QNREDTRVSANRRDDFNR).

Belongs to the BIG GRAIN 1 (BG1) plant protein family.

It is found in the cell membrane. In terms of biological role, involved in auxin transport. Regulator of the auxin signaling pathway. The polypeptide is Protein BIG GRAIN 1-like B (Arabidopsis thaliana (Mouse-ear cress)).